The primary structure comprises 301 residues: Small ribosomal subunit protein uS2 (301 aa).

The protein belongs to the universal ribosomal protein uS2 family. In terms of assembly, component of the small ribosomal subunit. Mature ribosomes consist of a small (40S) and a large (60S) subunit. The 40S subunit contains about 33 different proteins and 1 molecule of RNA (18S). The 60S subunit contains about 49 different proteins and 3 molecules of RNA (25S, 5.8S and 5S). Interacts with RPS21.

It is found in the cytoplasm. Its function is as follows. Required for the assembly and/or stability of the 40S ribosomal subunit. Required for the processing of the 20S rRNA-precursor to mature 18S rRNA in a late step of the maturation of 40S ribosomal subunits. This chain is Small ribosomal subunit protein uS2, found in Ajellomyces dermatitidis (strain ER-3 / ATCC MYA-2586) (Blastomyces dermatitidis).